A 422-amino-acid chain; its full sequence is Interleukin-11 receptor subunit alpha (422 aa).

Positions 1–22 (MSSSCSGLSRVLVAVATALVSA) are cleaved as a signal peptide. Over 24–370 (SPCPQAWGPP…DSVEQVAVLV (347 aa)) the chain is Extracellular. The Ig-like C2-type domain maps to 27-110 (PQAWGPPGVQ…LGGTVTLQLG (84 aa)). Cystine bridges form between C48-C94, C120-C130, and C170-C180. Fibronectin type-III domains lie at 112 to 219 (PPAR…LRPD) and 220 to 317 (PPQG…TPST). N-linked (GlcNAc...) asparagine glycosylation is present at N127. An N-linked (GlcNAc...) asparagine glycan is attached at N194. The WSXWS motif motif lies at 304 to 308 (WSTWS). The interval 335–355 (EVEPQVDSPAPPRPSLQPHPR) is disordered. Residues 371–391 (SLGILSFLGLVAGALALGLWL) traverse the membrane as a helical segment. Topologically, residues 392–422 (RLRRGGKDGSPKPGFLASVIPVDRHPGAPNL) are cytoplasmic.

Belongs to the type I cytokine receptor family. Type 3 subfamily. In terms of assembly, on IL11 binding, forms a multimer complex with IL6ST/gp130. A short soluble form is also released from the membrane by proteolysis. The sIL11RA is formed either by limited proteolysis of membrane-bound receptors, a process referred to as ectodomain shedding, or directly secreted from the cells after alternative mRNA splicing. mIL11RA is cleaved by the proteases ADAM10, ELANE and PRTN3.

The protein resides in the membrane. The protein localises to the secreted. Receptor for interleukin-11 (IL11). The receptor systems for IL6, LIF, OSM, CNTF, IL11 and CT1 can utilize IL6ST for initiating signal transmission. The IL11/IL11RA/IL6ST complex may be involved in the control of proliferation and/or differentiation of skeletogenic progenitor or other mesenchymal cells. Essential for the normal development of craniofacial bones and teeth. Restricts suture fusion and tooth number. Functionally, soluble form of IL11 receptor (sIL11RA) that acts as an agonist of IL11 activity. The IL11:sIL11RA complex binds to IL6ST/gp130 on cell surfaces and induces signaling also on cells that do not express membrane-bound IL11RA in a process called IL11 trans-signaling. The polypeptide is Interleukin-11 receptor subunit alpha (IL11RA) (Pongo abelii (Sumatran orangutan)).